A 155-amino-acid polypeptide reads, in one-letter code: SsrA-binding protein (155 aa).

The disordered stretch occupies residues 132 to 155 (DKREDLKQKQMKRDVDRAIKDHMR).

The protein belongs to the SmpB family.

Its subcellular location is the cytoplasm. Required for rescue of stalled ribosomes mediated by trans-translation. Binds to transfer-messenger RNA (tmRNA), required for stable association of tmRNA with ribosomes. tmRNA and SmpB together mimic tRNA shape, replacing the anticodon stem-loop with SmpB. tmRNA is encoded by the ssrA gene; the 2 termini fold to resemble tRNA(Ala) and it encodes a 'tag peptide', a short internal open reading frame. During trans-translation Ala-aminoacylated tmRNA acts like a tRNA, entering the A-site of stalled ribosomes, displacing the stalled mRNA. The ribosome then switches to translate the ORF on the tmRNA; the nascent peptide is terminated with the 'tag peptide' encoded by the tmRNA and targeted for degradation. The ribosome is freed to recommence translation, which seems to be the essential function of trans-translation. In Oceanobacillus iheyensis (strain DSM 14371 / CIP 107618 / JCM 11309 / KCTC 3954 / HTE831), this protein is SsrA-binding protein.